A 418-amino-acid chain; its full sequence is MKDSFVVTGGTRLQGAIKVSGAKNSVLKLMSAALLAPGTTMLTNCPEIADVPYMAEVLRGLGCEVELDGDVVRITTPESIEYNADFEAVRQFRASVAVLGPLTSRCHKARVALPGGDAIGSRPLDMHQSGLELLGATTKIEHGCLVAEAEELRGAQIKLDFPSVGATENILTAAVLAEGTTTLDNAAREPEIVDLCNMLVAMGAKIDGAGSNTITVEGVDRLNPVDHEVVGDRIVAGTWAYAAAMTRGDITVGGIDPQHLHLVLEKLKLAGAQVETYPTGFRVVQNERPKAVDYQTLPFPGFPTDLQPMAIALCTVSEGMSVITENIFESRFRFVDEMMRLGADASIDGHHVVIRGREQLSSAPVWSSDIRAGAGLVLAGLVADGKTEVHDVYHIDRGYPEFPEQLRSLGAEVERVQR.

23–24 (KN) contributes to the phosphoenolpyruvate binding site. Arginine 93 is a binding site for UDP-N-acetyl-alpha-D-glucosamine. Aspartate 117 acts as the Proton donor in catalysis. 2 residues coordinate UDP-N-acetyl-alpha-D-glucosamine: aspartate 305 and isoleucine 327.

This sequence belongs to the EPSP synthase family. MurA subfamily.

The protein resides in the cytoplasm. It carries out the reaction phosphoenolpyruvate + UDP-N-acetyl-alpha-D-glucosamine = UDP-N-acetyl-3-O-(1-carboxyvinyl)-alpha-D-glucosamine + phosphate. It functions in the pathway cell wall biogenesis; peptidoglycan biosynthesis. Its function is as follows. Cell wall formation. Adds enolpyruvyl to UDP-N-acetylglucosamine. This Corynebacterium jeikeium (strain K411) protein is UDP-N-acetylglucosamine 1-carboxyvinyltransferase.